The following is a 385-amino-acid chain: Homoserine O-succinyltransferase (385 aa).

The region spanning Asn-51–Leu-359 is the AB hydrolase-1 domain. Catalysis depends on Ser-157, which acts as the Nucleophile. Position 227 (Arg-227) interacts with substrate. Residues Asp-322 and His-355 contribute to the active site. A substrate-binding site is contributed by Asp-356.

This sequence belongs to the AB hydrolase superfamily. MetX family. In terms of assembly, homodimer.

The protein resides in the cytoplasm. The enzyme catalyses L-homoserine + succinyl-CoA = O-succinyl-L-homoserine + CoA. Its pathway is amino-acid biosynthesis; L-methionine biosynthesis via de novo pathway; O-succinyl-L-homoserine from L-homoserine: step 1/1. Its function is as follows. Transfers a succinyl group from succinyl-CoA to L-homoserine, forming succinyl-L-homoserine. This is Homoserine O-succinyltransferase from Marinomonas sp. (strain MWYL1).